Reading from the N-terminus, the 741-residue chain is Pentatricopeptide repeat-containing protein At1g05670, mitochondrial (741 aa).

The transit peptide at 1 to 21 directs the protein to the mitochondrion; that stretch reads MKKPFTGLLMKRGTLSSFRNF. PPR repeat units follow at residues 174 to 208, 209 to 244, 245 to 279, 280 to 314, 315 to 349, 350 to 384, 385 to 419, 420 to 454, 455 to 489, 490 to 524, 525 to 559, 560 to 594, 595 to 629, 630 to 664, and 665 to 699; these read DPRV…GLVL, SVDS…GVCW, NVAS…GYTP, DVIS…GLKP, NSYI…GILP, DTVV…DITP, DVLT…GLEP, DSVT…GCSP, NVVT…GLQP, NIFT…GLNA, DTVT…GLQP, TIVT…GIAP, NATT…GVGP, DGKT…GFSV, and SVST…GLAA.

The protein belongs to the PPR family. P subfamily.

The protein resides in the mitochondrion. In Arabidopsis thaliana (Mouse-ear cress), this protein is Pentatricopeptide repeat-containing protein At1g05670, mitochondrial.